The sequence spans 196 residues: Pyridoxal 5'-phosphate synthase subunit PdxT (196 aa).

47-49 (GES) is a binding site for L-glutamine. The active-site Nucleophile is the C79. Residues R106 and 134 to 135 (IR) contribute to the L-glutamine site. Residues H170 and E172 each act as charge relay system in the active site.

Belongs to the glutaminase PdxT/SNO family. As to quaternary structure, in the presence of PdxS, forms a dodecamer of heterodimers. Only shows activity in the heterodimer.

The catalysed reaction is aldehydo-D-ribose 5-phosphate + D-glyceraldehyde 3-phosphate + L-glutamine = pyridoxal 5'-phosphate + L-glutamate + phosphate + 3 H2O + H(+). The enzyme catalyses L-glutamine + H2O = L-glutamate + NH4(+). The protein operates within cofactor biosynthesis; pyridoxal 5'-phosphate biosynthesis. Catalyzes the hydrolysis of glutamine to glutamate and ammonia as part of the biosynthesis of pyridoxal 5'-phosphate. The resulting ammonia molecule is channeled to the active site of PdxS. This is Pyridoxal 5'-phosphate synthase subunit PdxT from Bacillus cytotoxicus (strain DSM 22905 / CIP 110041 / 391-98 / NVH 391-98).